The sequence spans 398 residues: Carbamoyl phosphate synthase small chain (398 aa).

The CPSase stretch occupies residues 1 to 204 (MSPLLPSFPP…PAYGTLDTGK (204 aa)). 3 residues coordinate L-glutamine: serine 53, glycine 256, and glycine 258. Positions 208-395 (KVVAYDFGVK…VELMNAASKK (188 aa)) constitute a Glutamine amidotransferase type-1 domain. The Nucleophile role is filled by cysteine 284. Residues leucine 285, glutamine 288, asparagine 326, glycine 328, and phenylalanine 329 each coordinate L-glutamine. Active-site residues include histidine 368 and glutamate 370.

It belongs to the CarA family. Composed of two chains; the small (or glutamine) chain promotes the hydrolysis of glutamine to ammonia, which is used by the large (or ammonia) chain to synthesize carbamoyl phosphate. Tetramer of heterodimers (alpha,beta)4.

The catalysed reaction is hydrogencarbonate + L-glutamine + 2 ATP + H2O = carbamoyl phosphate + L-glutamate + 2 ADP + phosphate + 2 H(+). It carries out the reaction L-glutamine + H2O = L-glutamate + NH4(+). It participates in amino-acid biosynthesis; L-arginine biosynthesis; carbamoyl phosphate from bicarbonate: step 1/1. Its pathway is pyrimidine metabolism; UMP biosynthesis via de novo pathway; (S)-dihydroorotate from bicarbonate: step 1/3. In terms of biological role, small subunit of the glutamine-dependent carbamoyl phosphate synthetase (CPSase). CPSase catalyzes the formation of carbamoyl phosphate from the ammonia moiety of glutamine, carbonate, and phosphate donated by ATP, constituting the first step of 2 biosynthetic pathways, one leading to arginine and/or urea and the other to pyrimidine nucleotides. The small subunit (glutamine amidotransferase) binds and cleaves glutamine to supply the large subunit with the substrate ammonia. The polypeptide is Carbamoyl phosphate synthase small chain (Polynucleobacter necessarius subsp. necessarius (strain STIR1)).